Reading from the N-terminus, the 1450-residue chain is Protein TIC 214 (1450 aa).

Transmembrane regions (helical) follow at residues Phe29–Ile49, Val61–Thr81, Leu86–Gln106, Phe132–Phe152, Leu166–Ala186, and Ile213–Phe233.

This sequence belongs to the TIC214 family. Part of the Tic complex.

Its subcellular location is the plastid. The protein localises to the chloroplast inner membrane. Its function is as follows. Involved in protein precursor import into chloroplasts. May be part of an intermediate translocation complex acting as a protein-conducting channel at the inner envelope. The protein is Protein TIC 214 of Chaetosphaeridium globosum (Charophycean green alga).